Reading from the N-terminus, the 186-residue chain is Potassium-transporting ATPase KdpC subunit (186 aa).

The chain crosses the membrane as a helical span at residues 10–30 (LTIITMVLCGFLFPLAITLIG).

Belongs to the KdpC family. As to quaternary structure, the system is composed of three essential subunits: KdpA, KdpB and KdpC.

The protein localises to the cell membrane. In terms of biological role, part of the high-affinity ATP-driven potassium transport (or Kdp) system, which catalyzes the hydrolysis of ATP coupled with the electrogenic transport of potassium into the cytoplasm. This subunit acts as a catalytic chaperone that increases the ATP-binding affinity of the ATP-hydrolyzing subunit KdpB by the formation of a transient KdpB/KdpC/ATP ternary complex. The chain is Potassium-transporting ATPase KdpC subunit from Staphylococcus aureus (strain MSSA476).